Consider the following 435-residue polypeptide: Histidine--tRNA ligase (435 aa).

This sequence belongs to the class-II aminoacyl-tRNA synthetase family. As to quaternary structure, homodimer.

It localises to the cytoplasm. It catalyses the reaction tRNA(His) + L-histidine + ATP = L-histidyl-tRNA(His) + AMP + diphosphate + H(+). This chain is Histidine--tRNA ligase, found in Synechococcus sp. (strain ATCC 27144 / PCC 6301 / SAUG 1402/1) (Anacystis nidulans).